A 156-amino-acid chain; its full sequence is MEKIPMTRAGFAALDDELKLLKTVERPAVIRAIAEAREHGDLSENAEYHAAREKQSFIEGRIKELEALLSLAEVIDPARLSGSIKFGATVTILDEETEEEKTYQIVGEAEADIENGLLNIKSPLARALIGKDEGDSIEVKTPGGERGYEVVSVRFV.

The stretch at alanine 46–glutamate 73 forms a coiled coil.

The protein belongs to the GreA/GreB family.

Its function is as follows. Necessary for efficient RNA polymerase transcription elongation past template-encoded arresting sites. The arresting sites in DNA have the property of trapping a certain fraction of elongating RNA polymerases that pass through, resulting in locked ternary complexes. Cleavage of the nascent transcript by cleavage factors such as GreA or GreB allows the resumption of elongation from the new 3'terminus. GreA releases sequences of 2 to 3 nucleotides. This Cereibacter sphaeroides (strain ATCC 17025 / ATH 2.4.3) (Rhodobacter sphaeroides) protein is Transcription elongation factor GreA.